A 134-amino-acid chain; its full sequence is Beta-synuclein (134 aa).

Tandem repeats lie at residues 20–30 and 31–41. Positions 20-67 are 4 X 11 AA tandem repeats of [EGS]-K-T-K-[EQ]-[GQ]-V-X(4); that stretch reads EKTKQGVTEAAEKTKEGVLYVGSKTREGVVQGVASVAEKTKEQASHLG. A 3; approximate repeat occupies 42 to 56; the sequence is SKTREGVVQGVASVA. Repeat 4 spans residues 57-67; sequence EKTKEQASHLG. The disordered stretch occupies residues 89-134; that stretch reads FPTDLKPEEVAQEAAEEPLIEPLMEPEGESYEDPPQEEYQEYEPEA. Over residues 98–134 the composition is skewed to acidic residues; it reads VAQEAAEEPLIEPLMEPEGESYEDPPQEEYQEYEPEA. Serine 118 is modified (phosphoserine; by BARK1, CK2 and GRK5).

Belongs to the synuclein family. Post-translationally, phosphorylated. Phosphorylation by G-protein coupled receptor kinases (GRK) is more efficient than phosphorylation by CK1, CK2 and CaM-kinase II. As to expression, expressed predominantly in brain; concentrated in presynaptic nerve terminals.

Its subcellular location is the cytoplasm. Its function is as follows. Non-amyloid component of senile plaques found in Alzheimer disease. Could act as a regulator of SNCA aggregation process. Protects neurons from staurosporine and 6-hydroxy dopamine (6OHDA)-stimulated caspase activation in a p53/TP53-dependent manner. Contributes to restore the SNCA anti-apoptotic function abolished by 6OHDA. Not found in the Lewy bodies associated with Parkinson disease. This chain is Beta-synuclein (SNCB), found in Homo sapiens (Human).